Reading from the N-terminus, the 89-residue chain is MRPNIHPEYRQVLFHDLTANTYFLVGSTLKTDRTKQWEDGNTYPYVTLDVSSASHPFYTGKQKQIGKEGQVARFGQRFGQFFNKGKDKS.

The protein belongs to the bacterial ribosomal protein bL31 family. Type B subfamily. In terms of assembly, part of the 50S ribosomal subunit.

In Aeromonas salmonicida (strain A449), this protein is Large ribosomal subunit protein bL31B.